A 527-amino-acid polypeptide reads, in one-letter code: Amine oxidase [flavin-containing] A (527 aa).

Methionine 1 is modified (N-acetylmethionine). Residues 1–497 (MASREKTSIE…HTFWERNLPS (497 aa)) lie on the Cytoplasmic side of the membrane. Serine 383 bears the Phosphoserine mark. S-8alpha-FAD cysteine is present on cysteine 406. The helical; Anchor for type IV membrane protein transmembrane segment at 498 to 518 (VTGLLKLIGFTTSVTALWIVA) threads the bilayer. Residues 519-527 (YKFRLLRRS) are Mitochondrial intermembrane-facing. The tract at residues 520-522 (KFR) is interaction with membrane phospholipid headgroups.

Belongs to the flavin monoamine oxidase family. Monomer, homo- or heterodimer (containing two subunits of similar size). Each subunit contains a covalently bound flavin. Enzymatically active as monomer. Requires FAD as cofactor.

The protein resides in the mitochondrion outer membrane. The catalysed reaction is a secondary aliphatic amine + O2 + H2O = a primary amine + an aldehyde + H2O2. It carries out the reaction a primary methyl amine + O2 + H2O = an aldehyde + H2O2 + NH4(+). It catalyses the reaction (R)-adrenaline + O2 + H2O = (R)-3,4-dihydroxymandelaldehyde + methylamine + H2O2. The enzyme catalyses dopamine + O2 + H2O = 3,4-dihydroxyphenylacetaldehyde + H2O2 + NH4(+). The catalysed reaction is tyramine + O2 + H2O = (4-hydroxyphenyl)acetaldehyde + H2O2 + NH4(+). It carries out the reaction (R)-noradrenaline + O2 + H2O = (R)-3,4-dihydroxymandelaldehyde + H2O2 + NH4(+). It catalyses the reaction serotonin + O2 + H2O = (5-hydroxyindol-3-yl)acetaldehyde + H2O2 + NH4(+). The enzyme catalyses kynuramine + O2 + H2O = 3-(2-aminophenyl)-3-oxopropanal + H2O2 + NH4(+). The catalysed reaction is tryptamine + O2 + H2O = indole-3-acetaldehyde + H2O2 + NH4(+). It carries out the reaction 2-phenylethylamine + O2 + H2O = 2-phenylacetaldehyde + H2O2 + NH4(+). In terms of biological role, catalyzes the oxidative deamination of primary and some secondary amine such as neurotransmitters, with concomitant reduction of oxygen to hydrogen peroxide and has important functions in the metabolism of neuroactive and vasoactive amines in the central nervous system and peripheral tissues. Preferentially oxidizes serotonin. Also catalyzes the oxidative deamination of kynuramine to 3-(2-aminophenyl)-3-oxopropanal that can spontaneously condense to 4-hydroxyquinoline. This Canis lupus familiaris (Dog) protein is Amine oxidase [flavin-containing] A.